The chain runs to 648 residues: MTNFEPKKLKNIWTIEDSISTYNIDKWGDKYFSINSKGNISVTKDIKSENKIDLFKLVKELKSREINPPLIIRFNDILKDRINALHDSFFKAIKTYKYKNIYQGVFPVKCNQQKNVLEKIIEFGSQWNFGLEVGSKSELLIGLALLENQNSLLICNGYKDKKYIEIATLARKLGKNPIIVIEQRDEVKRIIQAVQELNATPLIGIRAKLSSKSSGRWGKSIGDNSKFGLSIPEIMLTIKELKEANLINEMKLLHFHIGSQISDIAVIKDALQEASQIYVELCKLGAPMQYIDVGGGLGIDFDGTKTSSNTSTNYSLQNYANDVIATIKDSCELNNIKHPIIISESGRAIISHCSVLIFNVLGTSHVSSKLQIFDKKNQQLIISNLLETFYELKKLKNKKINLSQIIELWNDAKKFKEDCLVAFRLGFLSLAERAYAEELTWACAKEISKNLNNDAINHPDLSEITETLASTYYANLSIFKSIPDSWAINQIFPIVPIHRHLEEPFCKGNFADLTCDSDGKLNNFIDDGKIKSLLNLHKPEEDKDYLIGIFMTGAYQEALGNLHNLFGSTNVVHIDINQDNSYKVKNIIKEDSKSEILQLLDYSSASLVESIRINTESAIDQKKLTIEEARKLMDQIEISLRKSSYLSE.

N6-(pyridoxal phosphate)lysine is present on K109. I291–F301 contributes to the substrate binding site.

This sequence belongs to the Orn/Lys/Arg decarboxylase class-II family. SpeA subfamily. Requires Mg(2+) as cofactor. It depends on pyridoxal 5'-phosphate as a cofactor.

It carries out the reaction L-arginine + H(+) = agmatine + CO2. It functions in the pathway amine and polyamine biosynthesis; agmatine biosynthesis; agmatine from L-arginine: step 1/1. Catalyzes the biosynthesis of agmatine from arginine. The chain is Biosynthetic arginine decarboxylase from Prochlorococcus marinus (strain MIT 9312).